Here is a 276-residue protein sequence, read N- to C-terminus: Large ribosomal subunit protein uL2cy (276 aa).

Disordered stretches follow at residues 1 to 25 (MAIH…VKSN) and 225 to 276 (MNPV…RRSK). The segment covering 7–25 (KTSTPSTRNGTVDSQVKSN) has biased composition (polar residues).

It belongs to the universal ribosomal protein uL2 family. As to quaternary structure, part of the 50S ribosomal subunit.

The protein localises to the plastid. Its subcellular location is the chloroplast. This Coffea arabica (Arabian coffee) protein is Large ribosomal subunit protein uL2cy (rpl2-B).